A 466-amino-acid chain; its full sequence is Neuronal acetylcholine receptor subunit non-alpha-3 (466 aa).

Residues 1–28 (MKLQISGLLLVTAVAYATIEAPEEFVSL) form the signal peptide. Topologically, residues 29-235 (AEMEDTLLRN…VTYSFILKRL (207 aa)) are extracellular. Residues Asn54, Asn141, Asn169, and Asn208 are each glycosylated (N-linked (GlcNAc...) asparagine). An intrachain disulfide couples Cys156 to Cys170. A run of 3 helical transmembrane segments spans residues 236–260 (PLFY…VFYL), 268–285 (LLLS…LLVI), and 302–323 (YLLF…VINV). At 324–438 (HHRSSATYHP…WKFVAQVLDR (115 aa)) the chain is on the cytoplasmic side. A helical transmembrane segment spans residues 439–456 (IFLWVFLTASVLGTILIF).

Belongs to the ligand-gated ion channel (TC 1.A.9) family. Acetylcholine receptor (TC 1.A.9.1) subfamily. In terms of assembly, neuronal AChR seems to be composed of two different type of subunits: alpha and non-alpha (beta). In terms of tissue distribution, retina, tectum and brain.

The protein resides in the postsynaptic cell membrane. The protein localises to the cell membrane. After binding acetylcholine, the AChR responds by an extensive change in conformation that affects all subunits and leads to opening of an ion-conducting channel across the plasma membrane. The protein is Neuronal acetylcholine receptor subunit non-alpha-3 of Carassius auratus (Goldfish).